The primary structure comprises 221 residues: Immediate early response gene 2 protein (221 aa).

M1 bears the N-acetylmethionine mark. The interval 54-156 (THQPEFPPSR…EGEATSEVSN (103 aa)) is disordered. Over residues 64–77 (RALDPRLHPPREPE) the composition is skewed to basic and acidic residues. Positions 125–136 (SDLSDGSDAGLV) are enriched in low complexity.

This sequence belongs to the IER family.

It is found in the cytoplasm. Its subcellular location is the nucleus. In terms of biological role, DNA-binding protein that seems to act as a transcription factor. Involved in the regulation of neuronal differentiation, acts upon JNK-signaling pathway activation and plays a role in neurite outgrowth in hippocampal cells. May mediate with FIBP FGF-signaling in the establishment of laterality in the embryo. Promotes cell motility, seems to stimulate tumor metastasis. This Rattus norvegicus (Rat) protein is Immediate early response gene 2 protein (Ier2).